A 668-amino-acid polypeptide reads, in one-letter code: Fructose-1,6-bisphosphatase class 3 (668 aa).

This sequence belongs to the FBPase class 3 family. Mn(2+) is required as a cofactor.

It catalyses the reaction beta-D-fructose 1,6-bisphosphate + H2O = beta-D-fructose 6-phosphate + phosphate. It participates in carbohydrate biosynthesis; gluconeogenesis. In Clostridium botulinum (strain Kyoto / Type A2), this protein is Fructose-1,6-bisphosphatase class 3.